Reading from the N-terminus, the 382-residue chain is MKALHFGAGNIGRGFIGKLLADAGVQLTFADVNQAVLDALNARGTYPVHVVGEQAQIEIVNGVNAVHSSSDDIIALIAEVDIVTTAVGPQILERIAAGMAQGIAKRSDNANSRPLNIIACENMVRGTTQLKAHVLKALPERYHAWLEEHVGFVDSAVDRIVPPSAADSSDPLEVTVETFSEWIVDKTQFKGEPPTIPGMELTDNLMAFVERKLFTLNTGHAIAAYLGQLAGHKTIREAIMDKKVRAIVQGAMEESGAVLIKRYGFAADKHAAYIQKIINRFENPYLIDDVERVGRQPLRKLSAGDRLIKPTLGTLEYHLPNNNLVTGIAAALLYRNEGDPQAIELAGLLSRQDVATTLVHISGLDKDSDVVKAVVKAVNALA.

3-14 provides a ligand contact to NAD(+); that stretch reads ALHFGAGNIGRG.

This sequence belongs to the mannitol dehydrogenase family.

It catalyses the reaction D-mannitol 1-phosphate + NAD(+) = beta-D-fructose 6-phosphate + NADH + H(+). In Erwinia tasmaniensis (strain DSM 17950 / CFBP 7177 / CIP 109463 / NCPPB 4357 / Et1/99), this protein is Mannitol-1-phosphate 5-dehydrogenase.